We begin with the raw amino-acid sequence, 225 residues long: UPF0758 protein Sfri_3828 (225 aa).

Positions 102–224 (ILTNPDLTRD…IVSFAERGWI (123 aa)) constitute an MPN domain. 3 residues coordinate Zn(2+): H173, H175, and D186. The short motif at 173 to 186 (HNHPSGIAEPSQAD) is the JAMM motif element.

This sequence belongs to the UPF0758 family.

This Shewanella frigidimarina (strain NCIMB 400) protein is UPF0758 protein Sfri_3828.